Consider the following 236-residue polypeptide: MKVINATSYSDLSRKAANIISAQVILKPNSVLGLATGSTPIGTYKQLIEWYNKGDIDFSSTISVNLDEYVGLEPTNEQSYRYFMTENLFRHINIPQENTHVPSGLANDMEAECQNYDALITNLGGIDLQLLGIGHNGHIGFNEPDDAFEKTTHIVSLGESTIKANARFFEDINEVPTKAITMGIKSIMQAKKVLLIANGPDKKDIIEKALYGPVTPSVPASILQLHPDLTVICCFE.

The active-site Proton acceptor; for enolization step is D67. Catalysis depends on N136, which acts as the For ring-opening step. H138 functions as the Proton acceptor; for ring-opening step in the catalytic mechanism. E143 functions as the For ring-opening step in the catalytic mechanism.

The protein belongs to the glucosamine/galactosamine-6-phosphate isomerase family. NagB subfamily.

The catalysed reaction is alpha-D-glucosamine 6-phosphate + H2O = beta-D-fructose 6-phosphate + NH4(+). The protein operates within amino-sugar metabolism; N-acetylneuraminate degradation; D-fructose 6-phosphate from N-acetylneuraminate: step 5/5. In terms of biological role, catalyzes the reversible isomerization-deamination of glucosamine 6-phosphate (GlcN6P) to form fructose 6-phosphate (Fru6P) and ammonium ion. The chain is Glucosamine-6-phosphate deaminase from Lachnoclostridium phytofermentans (strain ATCC 700394 / DSM 18823 / ISDg) (Clostridium phytofermentans).